Here is a 709-residue protein sequence, read N- to C-terminus: FACT complex subunit SSRP1 (709 aa).

Alanine 2 carries the post-translational modification N-acetylalanine. Lysine 90 participates in a covalent cross-link: Glycyl lysine isopeptide (Lys-Gly) (interchain with G-Cter in SUMO2). Threonine 170 carries the post-translational modification Phosphothreonine. Position 233 is an N6-acetyllysine (lysine 233). Residues lysine 296 and lysine 364 each participate in a glycyl lysine isopeptide (Lys-Gly) (interchain with G-Cter in SUMO2) cross-link. Lysine 413 carries the post-translational modification N6-acetyllysine. Position 437 is a phosphoserine (serine 437). Tyrosine 441 is modified (phosphotyrosine). The residue at position 444 (serine 444) is a Phosphoserine. A Phosphotyrosine modification is found at tyrosine 452. Residues 458 to 709 (EEGKIREENA…SEDSASGSDE (252 aa)) form a disordered region. A compositionally biased stretch (acidic residues) spans 470–496 (SSDDSGEETDESFNPGEEEEDVAEEFD). Serine 471 carries the phosphoserine modification. A compositionally biased stretch (low complexity) spans 497–507 (SNASASSSSNE). Serine 510 carries the post-translational modification Phosphoserine; by CK2. The segment covering 515 to 533 (KKRKQLKKAKMAKDRKSRK) has biased composition (basic residues). Composition is skewed to basic and acidic residues over residues 534 to 546 (KPVE…DPNA) and 577 to 624 (LSKK…SSKR). Lysine 542 is subject to N6-acetyllysine. A DNA-binding region (HMG box) is located at residues 547-615 (PKRPMSAYML…DYEKAMKEYE (69 aa)). The span at 625 to 634 (DKSKKKKKVK) shows a compositional bias: basic residues. Positions 643-659 (PSRGSSSKSSSRQLSES) are enriched in low complexity. Serine 657, serine 659, serine 667, serine 668, serine 671, serine 672, and serine 673 each carry phosphoserine. A Phosphoserine; by CK2 modification is found at serine 688. Over residues 696 to 709 (TPPSSEDSASGSDE) the composition is skewed to polar residues.

The protein belongs to the SSRP1 family. In terms of assembly, interacts with MYOG (via C-terminal region). Component of the FACT complex, a stable heterodimer of SSRP1 and SUPT16H. Also a component of a CK2-SPT16-SSRP1 complex which forms following UV irradiation, composed of SSRP1, SUPT16H, CSNK2A1, CSNK2A2 and CSNK2B. Binds to histone H3-H4 tetramers, but not to intact nucleosomes. Identified in a centromere complex containing histones H2A, H2B and H4, and at least CENPA, CENPB, CENPC, CENPT, CENPN, HJURP, SUPT16H, SSRP1 and RSF1. Interacts with isoform gamma of TP63. Interacts with FYTTD1/UIF. Interacts with SRF. Interacts with NEK9. As to quaternary structure, (Microbial infection) Interacts with Herpes simplex virus 1 (HHV-1) protein ICP22; this interaction relocalizes the FACT complex to viral genomes in infected cells. Post-translationally, phosphorylated by CK2 following UV but not gamma irradiation. Phosphorylation inhibits its DNA-binding activity. In terms of processing, ubiquitinated. Polyubiquitinated following caspase cleavage resulting in degradation of the N-terminal ubiquitinated part of the cleaved protein. Sumoylated.

Its subcellular location is the nucleus. It localises to the nucleolus. The protein localises to the chromosome. Its function is as follows. Component of the FACT complex, a general chromatin factor that acts to reorganize nucleosomes. The FACT complex is involved in multiple processes that require DNA as a template such as mRNA elongation, DNA replication and DNA repair. During transcription elongation the FACT complex acts as a histone chaperone that both destabilizes and restores nucleosomal structure. It facilitates the passage of RNA polymerase II and transcription by promoting the dissociation of one histone H2A-H2B dimer from the nucleosome, then subsequently promotes the reestablishment of the nucleosome following the passage of RNA polymerase II. The FACT complex is probably also involved in phosphorylation of 'Ser-392' of p53/TP53 via its association with CK2 (casein kinase II). Binds specifically to double-stranded DNA and at low levels to DNA modified by the antitumor agent cisplatin. May potentiate cisplatin-induced cell death by blocking replication and repair of modified DNA. Also acts as a transcriptional coactivator for p63/TP63. This Homo sapiens (Human) protein is FACT complex subunit SSRP1 (SSRP1).